We begin with the raw amino-acid sequence, 608 residues long: Rap1 GTPase-GDP dissociation stimulator 1 (608 aa).

2 ARM repeats span residues 89-131 (GLIS…DQAG) and 171-212 (DSLQ…NLAE). Residues 122–171 (EGRSAVDQAGGAQIVVDHLRSLCSKTDPASEKLLTVFCGMLMNYSNEKND) are prevents binding to prenylated RHOA. Lys-231 bears the N6-acetyllysine mark. 3 ARM repeats span residues 348–391 (DGNC…NLAI), 392–432 (PVVN…MLID), and 480–520 (SKDV…LIAA).

In terms of assembly, interacts with RABL3. Interacts with RHOT1. As to quaternary structure, interacts with unprenylated RHOA; the interaction is direct. Interacts with RAP1A. Interacts with KRAS. Interacts with RAC1. Interacts with RAP1B. Preferentially interacts with unprenylated GTPases that will become geranylgeranylated. May also interact with prenylated GTPases. Interacts with prenylated RHOA; the interaction is direct and in a 1:1 stoichiometry. Interacts with RAP1A. Interacts with KRAS. Interacts with RAC1. Interacts with RAP1B. Preferentially interacts with prenylated GTPases. In terms of processing, the N-terminus is blocked. Post-translationally, forms covalent cross-links mediated by transglutaminase TGM2, between a glutamine and the epsilon-amino group of a lysine residue, forming homopolymers and heteropolymers. Brain.

The protein localises to the cytoplasm. Its subcellular location is the cytosol. It localises to the endoplasmic reticulum. It is found in the mitochondrion. The protein resides in the nucleus. Acts as a GEF (guanine nucleotide exchange factor) for the Rho family of small GTP-binding proteins (G proteins) that stimulates the dissociation of GDP to enable subsequent binding of GTP. Additionally, appears to chaperone the processing and/or trafficking of small GTPases containing a C-terminal polybasic region independently of GEF activity. Targets include RAP1A/RAP1B, RHOA, RHOB, RHOC, RAC1 and KRAS. Regulates mitochondrial dynamics by controlling RHOT function to promote mitochondrial fission during high calcium conditions. Able to promote the Ca(2+) release from the endoplasmic reticulum via both inositol trisphosphate (Ins3P) and ryanodine sensitive receptors leading to a enhanced mitochondrial Ca(2+) uptake. Its function is as follows. Acts as a GEF (guanine nucleotide exchange factor) for unprenylated RHOA. Chaperones the entry and passage of small GTPases through the prenylation pathway. Recognizes the last amino acid in the GTPase C-terminal CAAX motif with a preference for 'Leu' over 'Met', indicating involvement in the geranylgeranylation pathway. May also recognize prenylated GTPases. In terms of biological role, acts as a GEF (guanine nucleotide exchange factor) for prenylated RHOA. Acts as a GEF for RHOC. Chaperones the downstream trafficking and/or processing of small newly prenylated GTPases. Escorts RAC1 to the nucleus. This chain is Rap1 GTPase-GDP dissociation stimulator 1 (RAP1GDS1), found in Bos taurus (Bovine).